The following is a 396-amino-acid chain: Peroxisome proliferator-activated receptor delta (396 aa).

The tract at residues 1–24 (MKEEIPPRSPILDEQPSTPLEHQE) is disordered. Residues 15–24 (QPSTPLEHQE) are compositionally biased toward polar residues. The nuclear receptor DNA-binding region spans 28 to 102 (SVDCKICGDR…LGMSHNAIRF (75 aa)). NR C4-type zinc fingers lie at residues 31-51 (CKIC…CEGC) and 68-90 (CDRN…FNKC). One can recognise an NR LBD domain in the interval 166–394 (FVIHDMDTLW…HPLLQEIYRD (229 aa)).

It belongs to the nuclear hormone receptor family. NR1 subfamily. In terms of assembly, heterodimer with the retinoid X receptor. In terms of processing, 'Lys-48'-linked polyubiquitinated; leading to proteasomal degradation. Deubiquitinated and stabilized by OTUD3. Ubiquitous.

It localises to the nucleus. Functionally, ligand-activated transcription factor key mediator of energy metabolism in adipose tissues. Receptor that binds peroxisome proliferators such as hypolipidemic drugs and fatty acids. Has a preference for poly-unsaturated fatty acids, such as gamma-linoleic acid and eicosapentanoic acid. Once activated by a ligand, the receptor binds to promoter elements of target genes. Regulates the peroxisomal beta-oxidation pathway of fatty acids. Functions as a transcription activator for the acyl-CoA oxidase gene. Decreases expression of NPC1L1 once activated by a ligand. This Xenopus laevis (African clawed frog) protein is Peroxisome proliferator-activated receptor delta (ppard).